Reading from the N-terminus, the 242-residue chain is Ribose-5-phosphate isomerase A (242 aa).

Substrate-binding positions include 39-42 (SGST), 95-98 (DGAD), and 108-111 (KGGG). Glutamate 117 serves as the catalytic Proton acceptor. Lysine 135 provides a ligand contact to substrate.

The protein belongs to the ribose 5-phosphate isomerase family. As to quaternary structure, homodimer.

The enzyme catalyses aldehydo-D-ribose 5-phosphate = D-ribulose 5-phosphate. Its pathway is carbohydrate degradation; pentose phosphate pathway; D-ribose 5-phosphate from D-ribulose 5-phosphate (non-oxidative stage): step 1/1. Functionally, catalyzes the reversible conversion of ribose-5-phosphate to ribulose 5-phosphate. The polypeptide is Ribose-5-phosphate isomerase A (Chlamydia trachomatis serovar L2 (strain ATCC VR-902B / DSM 19102 / 434/Bu)).